Here is a 191-residue protein sequence, read N- to C-terminus: Ribonuclease HII (191 aa).

The RNase H type-2 domain occupies 7-191; sequence ILMAGVDEVG…YSPVADLISK (185 aa). A divalent metal cation contacts are provided by D13, E14, and D103.

It belongs to the RNase HII family. Mn(2+) is required as a cofactor. Requires Mg(2+) as cofactor.

It localises to the cytoplasm. The catalysed reaction is Endonucleolytic cleavage to 5'-phosphomonoester.. In terms of biological role, endonuclease that specifically degrades the RNA of RNA-DNA hybrids. The polypeptide is Ribonuclease HII (Legionella pneumophila (strain Corby)).